A 52-amino-acid chain; its full sequence is Large ribosomal subunit protein bL33 (52 aa).

Belongs to the bacterial ribosomal protein bL33 family.

The sequence is that of Large ribosomal subunit protein bL33 from Chlamydia trachomatis serovar L2 (strain ATCC VR-902B / DSM 19102 / 434/Bu).